We begin with the raw amino-acid sequence, 157 residues long: 2-C-methyl-D-erythritol 2,4-cyclodiphosphate synthase (157 aa).

Residues D8 and H10 each contribute to the a divalent metal cation site. Residues 8 to 10 (DVH) and 34 to 35 (HS) each bind 4-CDP-2-C-methyl-D-erythritol 2-phosphate. Residue H42 participates in a divalent metal cation binding. 4-CDP-2-C-methyl-D-erythritol 2-phosphate contacts are provided by residues 56 to 58 (DIG), 132 to 135 (TTNE), F139, and R142.

It belongs to the IspF family. As to quaternary structure, homotrimer. The cofactor is a divalent metal cation.

The catalysed reaction is 4-CDP-2-C-methyl-D-erythritol 2-phosphate = 2-C-methyl-D-erythritol 2,4-cyclic diphosphate + CMP. Its pathway is isoprenoid biosynthesis; isopentenyl diphosphate biosynthesis via DXP pathway; isopentenyl diphosphate from 1-deoxy-D-xylulose 5-phosphate: step 4/6. Involved in the biosynthesis of isopentenyl diphosphate (IPP) and dimethylallyl diphosphate (DMAPP), two major building blocks of isoprenoid compounds. Catalyzes the conversion of 4-diphosphocytidyl-2-C-methyl-D-erythritol 2-phosphate (CDP-ME2P) to 2-C-methyl-D-erythritol 2,4-cyclodiphosphate (ME-CPP) with a corresponding release of cytidine 5-monophosphate (CMP). The chain is 2-C-methyl-D-erythritol 2,4-cyclodiphosphate synthase from Symbiobacterium thermophilum (strain DSM 24528 / JCM 14929 / IAM 14863 / T).